A 511-amino-acid chain; its full sequence is Potassium voltage-gated channel subfamily A member 10 (511 aa).

Positions 25 to 44 (EPGYATDFDPTSSKGRPGSS) are disordered. Residues 218 to 238 (VAVVSVLVVVISITIFCLETL) form a helical membrane-spanning segment. A helical membrane pass occupies residues 271 to 292 (FFMVESTCIVWFTFELVLRFVV). The S-palmitoyl cysteine moiety is linked to residue Cys293. Residues 303–323 (IMNIIDIISIIPYFATLITEL) form a helical membrane-spanning segment. Residues 339 to 358 (ILRIIRLVRVFRIFKLSRHS) form a helical; Voltage-sensor membrane-spanning segment. The helical transmembrane segment at 375–395 (LGLLIFFLFIGVILFSSAVYF) threads the bilayer. The short motif at 421–426 (TVGYGD) is the Selectivity filter element. A helical transmembrane segment spans residues 436 to 456 (IVGTLCAIAGVLTIALPVPVI). The segment at 489–511 (SRMGSTESLNKTNGSCSAEKSRK) is disordered.

This sequence belongs to the potassium channel family. A (Shaker) (TC 1.A.1.2) subfamily. Kv1.8/KCNA10 sub-subfamily. As to quaternary structure, homotetramer. Interacts with KCN4B/POMP. Interaction with KCN4B/POMP is necessary for the modulation of channel activity by cAMP. Expressed strongly in the inner ear and weakly in skeletal muscle. Not detected in other tissues.

It localises to the membrane. The catalysed reaction is K(+)(in) = K(+)(out). With respect to regulation, the channel activity is up-regulated by cAMP. Functionally, voltage-gated potassium ion channel that mediates K(+) permeability of excitable membranes. When opened in response to the voltage difference across the membrane, KCNA10 channel selectively allows the flow of potassium ions across the membrane down their electrochemical gradient. The sequence is that of Potassium voltage-gated channel subfamily A member 10 from Mus musculus (Mouse).